The sequence spans 93 residues: UPF0473 protein YrzB (93 aa).

It belongs to the UPF0473 family.

This chain is UPF0473 protein YrzB (yrzB), found in Bacillus subtilis (strain 168).